We begin with the raw amino-acid sequence, 424 residues long: Serine--tRNA ligase (424 aa).

Residue threonine 231–glutamate 233 coordinates L-serine. Residue arginine 262–glutamate 264 coordinates ATP. Residue glutamate 285 participates in L-serine binding. Glutamate 349 to serine 352 contributes to the ATP binding site. Serine 385 is an L-serine binding site.

This sequence belongs to the class-II aminoacyl-tRNA synthetase family. Type-1 seryl-tRNA synthetase subfamily. In terms of assembly, homodimer. The tRNA molecule binds across the dimer.

Its subcellular location is the cytoplasm. It carries out the reaction tRNA(Ser) + L-serine + ATP = L-seryl-tRNA(Ser) + AMP + diphosphate + H(+). It catalyses the reaction tRNA(Sec) + L-serine + ATP = L-seryl-tRNA(Sec) + AMP + diphosphate + H(+). Its pathway is aminoacyl-tRNA biosynthesis; selenocysteinyl-tRNA(Sec) biosynthesis; L-seryl-tRNA(Sec) from L-serine and tRNA(Sec): step 1/1. Functionally, catalyzes the attachment of serine to tRNA(Ser). Is also able to aminoacylate tRNA(Sec) with serine, to form the misacylated tRNA L-seryl-tRNA(Sec), which will be further converted into selenocysteinyl-tRNA(Sec). This chain is Serine--tRNA ligase, found in Bacillus anthracis (strain A0248).